A 663-amino-acid polypeptide reads, in one-letter code: Meiotically up-regulated gene 60 protein (663 aa).

The region spanning 578 to 644 (PAEMHFYVPE…SENLWAVRSL (67 aa)) is the KH domain.

It localises to the cytoplasm. It is found in the nucleus. The protein localises to the cytoskeleton. Its subcellular location is the microtubule organizing center. The protein resides in the spindle pole body. Its function is as follows. Has a role in meiosis. This chain is Meiotically up-regulated gene 60 protein (mug60), found in Schizosaccharomyces pombe (strain 972 / ATCC 24843) (Fission yeast).